Reading from the N-terminus, the 373-residue chain is Dual-specificity RNA methyltransferase RlmN (373 aa).

The Proton acceptor role is filled by E94. Residues 100–339 form the Radical SAM core domain; it reads EEDRATLCVS…VIVRKTRGDD (240 aa). C107 and C344 are oxidised to a cystine. [4Fe-4S] cluster contacts are provided by C114, C118, and C121. Residues 168-169, S200, 222-224, and N301 each bind S-adenosyl-L-methionine; these read GE and SIH. C344 (S-methylcysteine intermediate) is an active-site residue.

Belongs to the radical SAM superfamily. RlmN family. Requires [4Fe-4S] cluster as cofactor.

It localises to the cytoplasm. The catalysed reaction is adenosine(2503) in 23S rRNA + 2 reduced [2Fe-2S]-[ferredoxin] + 2 S-adenosyl-L-methionine = 2-methyladenosine(2503) in 23S rRNA + 5'-deoxyadenosine + L-methionine + 2 oxidized [2Fe-2S]-[ferredoxin] + S-adenosyl-L-homocysteine. It catalyses the reaction adenosine(37) in tRNA + 2 reduced [2Fe-2S]-[ferredoxin] + 2 S-adenosyl-L-methionine = 2-methyladenosine(37) in tRNA + 5'-deoxyadenosine + L-methionine + 2 oxidized [2Fe-2S]-[ferredoxin] + S-adenosyl-L-homocysteine. Specifically methylates position 2 of adenine 2503 in 23S rRNA and position 2 of adenine 37 in tRNAs. m2A2503 modification seems to play a crucial role in the proofreading step occurring at the peptidyl transferase center and thus would serve to optimize ribosomal fidelity. This Shewanella sediminis (strain HAW-EB3) protein is Dual-specificity RNA methyltransferase RlmN.